Consider the following 255-residue polypeptide: Thiazole synthase (255 aa).

Lys-96 serves as the catalytic Schiff-base intermediate with DXP. Residues Gly-157, 183–184, and 205–206 contribute to the 1-deoxy-D-xylulose 5-phosphate site; these read AG and NS.

It belongs to the ThiG family. In terms of assembly, homotetramer. Forms heterodimers with either ThiH or ThiS.

It localises to the cytoplasm. The catalysed reaction is [ThiS sulfur-carrier protein]-C-terminal-Gly-aminoethanethioate + 2-iminoacetate + 1-deoxy-D-xylulose 5-phosphate = [ThiS sulfur-carrier protein]-C-terminal Gly-Gly + 2-[(2R,5Z)-2-carboxy-4-methylthiazol-5(2H)-ylidene]ethyl phosphate + 2 H2O + H(+). It functions in the pathway cofactor biosynthesis; thiamine diphosphate biosynthesis. Its function is as follows. Catalyzes the rearrangement of 1-deoxy-D-xylulose 5-phosphate (DXP) to produce the thiazole phosphate moiety of thiamine. Sulfur is provided by the thiocarboxylate moiety of the carrier protein ThiS. In vitro, sulfur can be provided by H(2)S. This Exiguobacterium sibiricum (strain DSM 17290 / CCUG 55495 / CIP 109462 / JCM 13490 / 255-15) protein is Thiazole synthase.